Here is a 189-residue protein sequence, read N- to C-terminus: Peptidyl-tRNA hydrolase (189 aa).

Tyr15 is a tRNA binding site. The active-site Proton acceptor is His20. The tRNA site is built by Phe66, Asn68, and Asn114.

This sequence belongs to the PTH family. As to quaternary structure, monomer.

The protein localises to the cytoplasm. The catalysed reaction is an N-acyl-L-alpha-aminoacyl-tRNA + H2O = an N-acyl-L-amino acid + a tRNA + H(+). In terms of biological role, hydrolyzes ribosome-free peptidyl-tRNAs (with 1 or more amino acids incorporated), which drop off the ribosome during protein synthesis, or as a result of ribosome stalling. Catalyzes the release of premature peptidyl moieties from peptidyl-tRNA molecules trapped in stalled 50S ribosomal subunits, and thus maintains levels of free tRNAs and 50S ribosomes. The protein is Peptidyl-tRNA hydrolase of Streptococcus pyogenes serotype M3 (strain ATCC BAA-595 / MGAS315).